Here is a 229-residue protein sequence, read N- to C-terminus: Protein AF_2251 (229 aa).

It belongs to the CinA family.

This Archaeoglobus fulgidus (strain ATCC 49558 / DSM 4304 / JCM 9628 / NBRC 100126 / VC-16) protein is Protein AF_2251.